A 57-amino-acid polypeptide reads, in one-letter code: Andropin (57 aa).

Residues Met-1 to Ala-23 form the signal peptide.

The protein belongs to the andropin family. In terms of tissue distribution, ejaculatory duct of adult males.

It localises to the secreted. Its function is as follows. Male-specific peptide with moderate activity against Gram-positive bacteria. In Drosophila mauritiana (Fruit fly), this protein is Andropin (Anp).